The sequence spans 152 residues: SsrA-binding protein (152 aa).

This sequence belongs to the SmpB family.

Its subcellular location is the cytoplasm. Its function is as follows. Required for rescue of stalled ribosomes mediated by trans-translation. Binds to transfer-messenger RNA (tmRNA), required for stable association of tmRNA with ribosomes. tmRNA and SmpB together mimic tRNA shape, replacing the anticodon stem-loop with SmpB. tmRNA is encoded by the ssrA gene; the 2 termini fold to resemble tRNA(Ala) and it encodes a 'tag peptide', a short internal open reading frame. During trans-translation Ala-aminoacylated tmRNA acts like a tRNA, entering the A-site of stalled ribosomes, displacing the stalled mRNA. The ribosome then switches to translate the ORF on the tmRNA; the nascent peptide is terminated with the 'tag peptide' encoded by the tmRNA and targeted for degradation. The ribosome is freed to recommence translation, which seems to be the essential function of trans-translation. This is SsrA-binding protein from Rickettsia prowazekii (strain Madrid E).